The primary structure comprises 561 residues: Septation ring formation regulator EzrA (561 aa).

At 1 to 3 (MWI) the chain is on the extracellular side. A helical transmembrane segment spans residues 4-22 (VVFSLLVLTVTFFVYGALR). The Cytoplasmic portion of the chain corresponds to 23 to 561 (RKAFYKRVDK…VLEKVQHLAG (539 aa)). Coiled-coil stretches lie at residues 98 to 130 (RFQKAKALLDTIEQRLHSIEEQLKIMVDDIQVL), 166 to 214 (AKVF…HLLK), and 251 to 465 (FAID…KLSD).

This sequence belongs to the EzrA family.

The protein localises to the cell membrane. Its function is as follows. Negative regulator of FtsZ ring formation; modulates the frequency and position of FtsZ ring formation. Inhibits FtsZ ring formation at polar sites. Interacts either with FtsZ or with one of its binding partners to promote depolymerization. The sequence is that of Septation ring formation regulator EzrA from Halalkalibacterium halodurans (strain ATCC BAA-125 / DSM 18197 / FERM 7344 / JCM 9153 / C-125) (Bacillus halodurans).